Here is a 225-residue protein sequence, read N- to C-terminus: Sodium-dependent neutral amino acid transporter SLC6A17 (225 aa).

A run of 3 helical transmembrane segments spans residues 1–8 (NVWRFPYL), 16–35 (AYLVPYLVLLIIIGIPLFFL), and 60–80 (GIGFSSCIVCLFVGLYYNVII). Residues 81–143 (GWSIFYFFKS…NSISESGGLN (63 aa)) lie on the Extracellular side of the membrane. A glycan (N-linked (GlcNAc...) asparagine) is linked at asparagine 105. 3 helical membrane-spanning segments follow: residues 144–162 (WKMTLCLLVAWRIVGMAVV), 171–188 (VMYFSSLFPYVVLACFLV), and 224–225 (IF).

This sequence belongs to the sodium:neurotransmitter symporter (SNF) (TC 2.A.22) family.

Its subcellular location is the cytoplasmic vesicle. The protein resides in the secretory vesicle. The protein localises to the synaptic vesicle membrane. It is found in the postsynapse. It localises to the presynapse. The catalysed reaction is L-proline(in) + Na(+)(in) = L-proline(out) + Na(+)(out). It carries out the reaction L-leucine(in) + Na(+)(in) = L-leucine(out) + Na(+)(out). It catalyses the reaction glycine(in) + Na(+)(in) = glycine(out) + Na(+)(out). The enzyme catalyses L-alanine(in) + Na(+)(in) = L-alanine(out) + Na(+)(out). The catalysed reaction is L-glutamine(in) + Na(+)(in) = L-glutamine(out) + Na(+)(out). Synaptic vesicle transporter with apparent selectivity for neutral amino acids. The transport is sodium-coupled but chloride-independent, likely driven by the proton electrochemical gradient generated by vacuolar H(+)-ATPase in an overall electrogenic mechanism. May contribute to the synaptic uptake of neurotransmitter precursors in a process coupled in part to vesicle exocytosis. The sequence is that of Sodium-dependent neutral amino acid transporter SLC6A17 from Bos taurus (Bovine).